Consider the following 520-residue polypeptide: DDB1- and CUL4-associated factor 17 (520 aa).

A run of 2 helical transmembrane segments spans residues 186–206 (VLLY…ILEI) and 222–242 (GILI…QTIA).

Interacts with DDB1, CUL4A and CUL4B. Ubiquitously expressed.

The protein resides in the membrane. Its subcellular location is the nucleus. It localises to the nucleolus. The protein operates within protein modification; protein ubiquitination. Its function is as follows. May function as a substrate receptor for CUL4-DDB1 E3 ubiquitin-protein ligase complex. This is DDB1- and CUL4-associated factor 17 (DCAF17) from Homo sapiens (Human).